A 293-amino-acid polypeptide reads, in one-letter code: Protease HtpX (293 aa).

Helical transmembrane passes span 4-24 (IGLF…VLSL) and 38-58 (LTNL…ISLF). His-145 is a binding site for Zn(2+). Glu-146 is a catalytic residue. His-149 is a Zn(2+) binding site. 2 helical membrane-spanning segments follow: residues 156 to 176 (ITLS…ARII) and 193 to 213 (IAFF…ASMI). Glu-222 contributes to the Zn(2+) binding site.

This sequence belongs to the peptidase M48B family. Zn(2+) is required as a cofactor.

It localises to the cell inner membrane. The chain is Protease HtpX from Cellvibrio japonicus (strain Ueda107) (Pseudomonas fluorescens subsp. cellulosa).